We begin with the raw amino-acid sequence, 460 residues long: Putative 2,3-dihydroxypropane-1-sulfonate exporter (460 aa).

Residues 1-18 (MSQTSSNPATLRLPFKEK) are Cytoplasmic-facing. The helical transmembrane segment at 19 to 39 (LAYGLGDLGSNILLDIGTLYL) threads the bilayer. The Periplasmic segment spans residues 40 to 46 (LKFYTDV). A helical membrane pass occupies residues 47–67 (LGLPGTYGGIIFLIAKFFTAF). Topologically, residues 68 to 91 (TDMGTGIMLDSRRKIGPKGKFRPF) are cytoplasmic. Residues 92 to 112 (VLYAAFPVTLLAIANFVGTPF) form a helical membrane-spanning segment. At 113–122 (EVTGKTVVAT) the chain is on the periplasmic side. The chain crosses the membrane as a helical span at residues 123–143 (MLFMLYGLVFSMMNCSYGAMV). Topologically, residues 144–161 (PAITKNPDERASLAAWRQ) are cytoplasmic. A helical transmembrane segment spans residues 162 to 182 (GGATLGLLLCTVGFVPVMNLI). Residues 183 to 190 (EGNAQLSY) lie on the Periplasmic side of the membrane. A helical transmembrane segment spans residues 191-211 (IFAATLFSLFGLLFMWLCYAG). Topologically, residues 212 to 242 (VKERYVEVKPVDSAQKPGLLQSFRAIAGNRP) are cytoplasmic. Residues 243–263 (LFILCIANLCTLGAFNVKLAI) traverse the membrane as a helical segment. Over 264 to 275 (QVYYTQYVLNDP) the chain is Periplasmic. Residues 276-296 (ILLSWMGFFSMGCIFIGVFLM) traverse the membrane as a helical segment. The Cytoplasmic segment spans residues 297–307 (PGAVRRFGKKK). A helical transmembrane segment spans residues 308–328 (VYIGGLLIWVAGDLLNYFFGG). Position 329 (Gly-329) is a topological domain, periplasmic. Residues 330–350 (SVSFVAFSCLAFFGSAFVNSL) traverse the membrane as a helical segment. Residues 351-386 (NWALVSDTVEYGEWRTGVRSEGTVYTGFTFFRKVSQ) are Cytoplasmic-facing. Residues 387 to 407 (ALAGFFPGWMLTQIGYIPNVV) traverse the membrane as a helical segment. Topologically, residues 408–418 (QSAGTVEGLRQ) are periplasmic. A helical membrane pass occupies residues 419–439 (LIFIYPCVLAVITIIAMGCFY). At 440–460 (NLNEKMYVRIVEEIEARKHTV) the chain is on the cytoplasmic side.

The protein belongs to the sodium:galactoside symporter (TC 2.A.2) family.

The protein resides in the cell inner membrane. In terms of biological role, could be involved in the export of 2,3-dihydroxypropane-1-sulfonate (DHPS). This is Putative 2,3-dihydroxypropane-1-sulfonate exporter (yihP) from Salmonella typhimurium (strain LT2 / SGSC1412 / ATCC 700720).